Consider the following 112-residue polypeptide: UPF0060 membrane protein XOO1694 (112 aa).

4 consecutive transmembrane segments (helical) span residues 8–28 (LLLFAATALAELVGCYLPYLW), 32–52 (GGSVWLLLPTALRLASFVWLL), 62–82 (VYAAYGGVYIASALGLWLWWV), and 92–112 (LLGAVCCLFGMAIIMFAPRSA).

Belongs to the UPF0060 family.

It localises to the cell inner membrane. This is UPF0060 membrane protein XOO1694 from Xanthomonas oryzae pv. oryzae (strain MAFF 311018).